The sequence spans 349 residues: Isopentenyl-diphosphate delta-isomerase (349 aa).

9 to 10 (RK) is a binding site for substrate. FMN contacts are provided by residues 65-67 (AMT), S95, and N124. Substrate is bound at residue 95–97 (STH). Q154 contacts substrate. Residue E155 participates in Mg(2+) binding. FMN contacts are provided by residues K186, S211, T216, 262–264 (GLR), and 283–284 (SR).

Belongs to the IPP isomerase type 2 family. Homooctamer. Dimer of tetramers. The cofactor is FMN. Requires NADPH as cofactor. Mg(2+) is required as a cofactor.

Its subcellular location is the cytoplasm. The catalysed reaction is isopentenyl diphosphate = dimethylallyl diphosphate. Functionally, involved in the biosynthesis of isoprenoids. Catalyzes the 1,3-allylic rearrangement of the homoallylic substrate isopentenyl (IPP) to its allylic isomer, dimethylallyl diphosphate (DMAPP). This is Isopentenyl-diphosphate delta-isomerase from Staphylococcus aureus.